We begin with the raw amino-acid sequence, 248 residues long: Killer cell lectin-like receptor subfamily I member 1 (248 aa).

Topologically, residues 1–80 are cytoplasmic; that stretch reads MLHSKRREYT…RQGPKSTVWR (80 aa). Short sequence motifs (ITIM motif) lie at residues 16–21 and 47–52; these read VTYTEL and LKYGEL. The chain crosses the membrane as a helical; Signal-anchor for type II membrane protein span at residues 81-101; that stretch reads VVTGMLGALCVVLMTTTGILL. Residues 102-248 are Extracellular-facing; it reads PKLFSSQEEQ…KKSYICEFNI (147 aa). Cystine bridges form between cysteine 132-cysteine 145, cysteine 161-cysteine 244, and cysteine 223-cysteine 236. Residues 139-245 enclose the C-type lectin domain; that stretch reads FGNNFYCVFK…CSAKKSYICE (107 aa). Residues asparagine 197, asparagine 214, and asparagine 220 are each glycosylated (N-linked (GlcNAc...) asparagine).

As to quaternary structure, heterodimer with KLRE1. Interacts with PTPN6. Expressed in natural killer (NK) cells.

Its subcellular location is the cell membrane. Its function is as follows. Lectin-like receptor for natural killer (NK) cells. Heterodimer formation with KLRE1 mediates inhibition of NK cell cytolytic activity. The sequence is that of Killer cell lectin-like receptor subfamily I member 1 from Mus musculus (Mouse).